The sequence spans 517 residues: MISVALIILFLAKVISGKSDDFISVNPETNMLIDGYGRERFFHGTNVVVKHFPFHPETTGFNKDTFSEDDMKILQKFGLNSIRLGMMLPGYVPKREEYNETYIKVIQSIVTTAAKYGIYTLLDMHQDVFSPKFCVEGMPDWIVNTQGAKDFPMPLHKPFNLDPKTGYPYPEDCAKFSWADYYFTEAAGQAFQNLYDNVDGLRDEWAQFWKKTADVFKEEPSVIGYELINEPFCGNVFKHPTLLIPGVADYLNLQPTYDALQKAIRQVDEEHNIFFEGVTWDFFEVGFTEVPGGKQYQNRSVLSYHYYEPPDFSKKLNFEARLLDLKRLKCGGFLTEMFTVGTDFNSMFEMFDLCDKFKQSWHGWMYKSYGCIEQNLGCLNMSSPGKESIQIANTSRTYPQAVAGRTQSYAFDIKTKVFTLVYETVGSCKSGRTIVYFNKNLHYPNGYRYEINPNFKVTPSENEYFLYLDEVNKVPNTVVTFKLFPLSFTDSEDIHPVTVMGDKHLSENHNENEKKKK.

A signal peptide spans 1-17 (MISVALIILFLAKVISG). N-linked (GlcNAc...) asparagine glycosylation is present at asparagine 99. Glutamate 230 serves as the catalytic Proton donor. N-linked (GlcNAc...) asparagine glycosylation is found at asparagine 298, asparagine 380, and asparagine 393.

It belongs to the glycosyl hydrolase 5 (cellulase A) family. Expressed uniformly in digestive cells, tentacles and peduncle regions suggesting expression in the endoderm throughout the whole body (at protein level).

It is found in the secreted. The catalysed reaction is an oligoglycosyl-(1-&gt;4)-beta-D-glucosyl-(1&lt;-&gt;1)-ceramide + H2O = an oligoglycosyl-(1-&gt;4)-D-glucose + an N-acyl-sphingoid base. With respect to regulation, cu(2+), zinc, manganese, calcium, magnesium and EDTA have no significant effects on enzyme activity. Enzyme requires presence of detergents such as Triton X-100 and Lubrol PX for the hydrolysis of glycosphingolipids. Taurodeoxycholate strongly inhibits the enzyme activity. Hydrolysis of the glycosidic linkage between oligosaccharides and ceramides of glycosphingolipids, optimal substrates appear to be the glycosphingolipids with a gangliotetraose structure. In Hydra vulgaris (Hydra), this protein is Endoglycoceramidase.